Reading from the N-terminus, the 430-residue chain is MFMERQDRYYQTYLNILKEELVAAMGCTEPIAIAYGAAKAREVLGAVPHKVVLEVSSNIIKNVKSVVVPNTDGLKGIEAATAAGIIAGRSDKILEVIAEVCQAEKQQIKTYLSETDIEVKLADSQIIFDIMITMFHQDSYVKLRIADYHTHIVHIEKNGEIIFGTGDLDAGISSLTDRKLLSVSKIIEFADSVRIEDVKELLDKQIEYNSAIARAGMEGNYGANVGRVLLKTYGNDVKIRAKAMAAAGSDARMSGCELPVIINSGSGNQGMTASLPVIEYAAELQSGEEKLYRALVVSNLITLHLKTGIGRLSAFCGVICAGCGSGAGIAYLHGGGYDEIAHTIVNAAAIVSGIVCDGAKPSCAGKIAAAVDAGILGYLMYKEGQQFRGGDGIVAKGIENTIANIGYLGKVGMKETDKEIINIMLNQCSS.

This sequence belongs to the UPF0597 family.

The protein is UPF0597 protein DSY1109 of Desulfitobacterium hafniense (strain Y51).